Reading from the N-terminus, the 434-residue chain is ATP-sensitive inward rectifier potassium channel 14 (434 aa).

The Cytoplasmic segment spans residues 1-81 (MGLARALRRL…LSDLFTTCVD (81 aa)). Cys79 carries the S-nitrosocysteine modification. A helical membrane pass occupies residues 82-108 (VRWRWMCLLFSCSFLASWLLFGLTFWL). Residues 109–131 (IASLHGDLAAPPPPAPCFSQVAS) lie on the Extracellular side of the membrane. Residues 132-148 (FLAAFLFALETQTSIGY) constitute an intramembrane region (helical; Pore-forming). The Selectivity filter motif lies at 145–150 (SIGYGV). At 149 to 157 (GVRSVTEEC) the chain is on the extracellular side. The helical transmembrane segment at 158–185 (PAAVAAVVLQCIAGCVLDAFVVGAVMAK) threads the bilayer. The Cytoplasmic portion of the chain corresponds to 186 to 434 (MAKPKKRNET…TPTLALTLPP (249 aa)). Positions 398–434 (QEEDEEEDTKEGTSAETPDRAASPQALTPTLALTLPP) are disordered. The span at 407-416 (KEGTSAETPD) shows a compositional bias: basic and acidic residues. A compositionally biased stretch (low complexity) spans 418–434 (AASPQALTPTLALTLPP).

It belongs to the inward rectifier-type potassium channel (TC 1.A.2.1) family. KCNJ14 subfamily. As to expression, expressed predominantly in motoneurons of cranial nerve motor nuclei within the general somatic and special visceral motor cell column.

The protein localises to the membrane. The catalysed reaction is K(+)(in) = K(+)(out). Its activity is regulated as follows. Channel activity is regulated by variations of cytosolic pH; channels are activated by alkaline and inhibited by acidic pH values. Inhibited by Ba(2+) and Cs(+) in a voltage-dependent manner; sensitivity to those inhibitors is lower than in other Kir channels. Its function is as follows. Inward rectifier potassium channels are characterized by a greater tendency to allow potassium to flow into the cell rather than out of it. Their voltage dependence is regulated by the concentration of extracellular potassium; as external potassium is raised, the voltage range of the channel opening shifts to more positive voltages. The chain is ATP-sensitive inward rectifier potassium channel 14 (Kcnj14) from Rattus norvegicus (Rat).